A 304-amino-acid polypeptide reads, in one-letter code: Aspartate carbamoyltransferase catalytic subunit (304 aa).

Carbamoyl phosphate contacts are provided by Arg-55 and Thr-56. An L-aspartate-binding site is contributed by Lys-84. Positions 105, 133, and 136 each coordinate carbamoyl phosphate. 2 residues coordinate L-aspartate: Arg-165 and Arg-226. Carbamoyl phosphate contacts are provided by Leu-265 and Pro-266.

It belongs to the aspartate/ornithine carbamoyltransferase superfamily. ATCase family. In terms of assembly, heterooligomer of catalytic and regulatory chains.

The catalysed reaction is carbamoyl phosphate + L-aspartate = N-carbamoyl-L-aspartate + phosphate + H(+). It functions in the pathway pyrimidine metabolism; UMP biosynthesis via de novo pathway; (S)-dihydroorotate from bicarbonate: step 2/3. In terms of biological role, catalyzes the condensation of carbamoyl phosphate and aspartate to form carbamoyl aspartate and inorganic phosphate, the committed step in the de novo pyrimidine nucleotide biosynthesis pathway. This is Aspartate carbamoyltransferase catalytic subunit from Methanothrix thermoacetophila (strain DSM 6194 / JCM 14653 / NBRC 101360 / PT) (Methanosaeta thermophila).